We begin with the raw amino-acid sequence, 593 residues long: Myc box-dependent-interacting protein 1 (593 aa).

Ala2 carries the N-acetylalanine modification. The tract at residues 2 to 122 is interaction with BIN2; that stretch reads AEMGSKGVTA…DYHQKLVDQA (121 aa). Coiled coils occupy residues 15–42 and 193–267; these read ASNV…TKDE and HLVA…NDVL. In terms of domain architecture, BAR spans 29-276; sequence VLQKLGKADE…LVGLEKQHGS (248 aa). Disordered stretches follow at residues 280-354 and 400-488; these read TVKA…KEVK and PVTS…AASS. Residues Ser296, Ser298, and Ser303 each carry the phosphoserine modification. 2 positions are modified to phosphothreonine: Thr307 and Thr323. Ser331 carries the phosphoserine modification. The segment at 378–421 is clathrin-binding; the sequence is FEAPGPFSEQASLLDLDFDPLPPVTSPVKAPTPSGQSIPWDLWE. The region spanning 520 to 593 is the SH3 domain; that stretch reads GFMFKVQAQH…FPENFTERVP (74 aa).

Heterodimer with AMPH. Binds SH3GLB1. Interacts (via SH3 domain) with DNM1. Interacts with SYNJ1. Interacts (via SH3 domain) with DNM2. Isoform IIA interacts with CLTC. Isoform IIB does not interact with CLTC. Isoform IIC1 does not interact with CLTC. Isoform IIC2 does not interact with CLTC. Interacts with AP2A2. Interacts with AP2B1. Interacts with MYC (via N-terminal transactivation domain); the interaction requires the integrity of the conserved MYC box regions 1 and 2. Interacts with BIN2. Interacts with SNX4. Interacts (via BAR domain) with BACE1. Binds (via BAR domain) F-actin. In terms of assembly, (Microbial infection) Interacts (SH3 domain) with HCV NS5A. Phosphorylated by protein kinase C. Ubiquitous. Highest expression in the brain and muscle. Expressed in oligodendrocytes. Isoform IIA is expressed only in the brain, where it is detected in the gray matter, but not in the white matter. Isoform BIN1 is widely expressed with highest expression in skeletal muscle.

It is found in the nucleus. It localises to the cytoplasm. Its subcellular location is the endosome. The protein resides in the cell membrane. The protein localises to the sarcolemma. It is found in the T-tubule. Is a key player in the control of plasma membrane curvature, membrane shaping and membrane remodeling. Required in muscle cells for the formation of T-tubules, tubular invaginations of the plasma membrane that function in depolarization-contraction coupling. Is a negative regulator of endocytosis. Is also involved in the regulation of intracellular vesicles sorting, modulation of BACE1 trafficking and the control of amyloid-beta production. In neuronal circuits, endocytosis regulation may influence the internalization of PHF-tau aggregates. May be involved in the regulation of MYC activity and the control cell proliferation. Has actin bundling activity and stabilizes actin filaments against depolymerization in vitro. In Homo sapiens (Human), this protein is Myc box-dependent-interacting protein 1 (BIN1).